The sequence spans 360 residues: DNA replication and repair protein RecF (360 aa).

Residue Gly30–Thr37 participates in ATP binding.

This sequence belongs to the RecF family.

The protein localises to the cytoplasm. In terms of biological role, the RecF protein is involved in DNA metabolism; it is required for DNA replication and normal SOS inducibility. RecF binds preferentially to single-stranded, linear DNA. It also seems to bind ATP. The protein is DNA replication and repair protein RecF of Acinetobacter baumannii (strain SDF).